The following is a 462-amino-acid chain: 7-hydroxymethyl chlorophyll a reductase, chloroplastic (462 aa).

The N-terminal 20 residues, 1 to 20 (MITVVTSRLSLLPPVFSVVN), are a transit peptide targeting the chloroplast.

This sequence belongs to the FrhB family. In terms of assembly, interacts with SGR1, the chlorophyll catabolic enzymes (CCEs) NYC1, NOL and RCCR, and the LHCII complex. Part of a SGR1-CCE-LHCII complex, which acts in chlorophyll breakdown. FAD serves as cofactor. It depends on iron-sulfur cluster as a cofactor.

The protein resides in the plastid. It localises to the chloroplast. The catalysed reaction is chlorophyll a + 2 oxidized [2Fe-2S]-[ferredoxin] + H2O = 7(1)-hydroxychlorophyll a + 2 reduced [2Fe-2S]-[ferredoxin] + 2 H(+). Probable iron-sulfur flavoprotein that converts 7-hydroxymethyl chlorophyll a to chlorophyll a using ferredoxin as a reducing equivalent. Catalyzes the reduction of a hydroxymethyl group to a methyl group. Belongs to the chlorophyll catabolic enzymes (CCEs). The polypeptide is 7-hydroxymethyl chlorophyll a reductase, chloroplastic (HCAR) (Arabidopsis thaliana (Mouse-ear cress)).